The chain runs to 451 residues: Uronate isomerase (451 aa).

This sequence belongs to the metallo-dependent hydrolases superfamily. Uronate isomerase family.

It carries out the reaction D-glucuronate = D-fructuronate. It catalyses the reaction aldehydo-D-galacturonate = keto-D-tagaturonate. Its pathway is carbohydrate metabolism; pentose and glucuronate interconversion. The protein is Uronate isomerase of Thermotoga petrophila (strain ATCC BAA-488 / DSM 13995 / JCM 10881 / RKU-1).